The following is a 505-amino-acid chain: L-arabinose isomerase (505 aa).

4 residues coordinate Mn(2+): Glu310, Glu337, His354, and His453.

The protein belongs to the arabinose isomerase family. The cofactor is Mn(2+).

The catalysed reaction is beta-L-arabinopyranose = L-ribulose. The protein operates within carbohydrate degradation; L-arabinose degradation via L-ribulose; D-xylulose 5-phosphate from L-arabinose (bacterial route): step 1/3. In terms of biological role, catalyzes the conversion of L-arabinose to L-ribulose. In Clavibacter sepedonicus (Clavibacter michiganensis subsp. sepedonicus), this protein is L-arabinose isomerase.